A 714-amino-acid polypeptide reads, in one-letter code: Cyclomaltodextrin glucanotransferase (714 aa).

A signal peptide spans 1 to 27 (MKSRYKRLTSLALSLSMALGISLPAWA). Residues 28–165 (SPDTSVDNKV…NIKVVIDFAP (138 aa)) are A1. The Ca(2+) site is built by Asp-54, Asn-59, Asn-60, Gly-78, and Asp-80. Substrate is bound at residue 127-128 (YW). Asn-166 contacts Ca(2+). The tract at residues 166–229 (NHTSPADRDN…NLYDLADINH (64 aa)) is b. A substrate-binding site is contributed by His-167. Ile-217 lines the Ca(2+) pocket. A substrate-binding site is contributed by 220–223 (NLYD). Asp-226 is a Ca(2+) binding site. An A2 region spans residues 230–434 (NNNAMDAYFK…LRKSNPAIAY (205 aa)). Residue Arg-254 coordinates substrate. The active-site Nucleophile is Asp-256. 259-260 (KH) provides a ligand contact to substrate. His-260 is a binding site for Ca(2+). Glu-285 (proton donor) is an active-site residue. Positions 355, 399, and 403 each coordinate substrate. A c region spans residues 435–523 (GTTTERWVNN…GTAVWQYTAP (89 aa)). The segment at 524 to 610 (ETSPAIGNVG…SNTFKSFNVL (87 aa)) is d. One can recognise an IPT/TIG domain in the interval 527 to 607 (PAIGNVGPTM…GTASNTFKSF (81 aa)). Residues 609–714 (VLTGDQVTVR…VGTVTVDWQN (106 aa)) form the CBM20 domain. An e region spans residues 611–714 (TGDQVTVRFL…VGTVTVDWQN (104 aa)).

This sequence belongs to the glycosyl hydrolase 13 family. As to quaternary structure, monomer. Ca(2+) serves as cofactor.

The protein resides in the secreted. The catalysed reaction is Cyclizes part of a (1-&gt;4)-alpha-D-glucan chain by formation of a (1-&gt;4)-alpha-D-glucosidic bond.. The sequence is that of Cyclomaltodextrin glucanotransferase (cgtM) from Paenibacillus macerans (Bacillus macerans).